The sequence spans 93 residues: Small ribosomal subunit protein uS19 (93 aa).

Belongs to the universal ribosomal protein uS19 family.

Functionally, protein S19 forms a complex with S13 that binds strongly to the 16S ribosomal RNA. The protein is Small ribosomal subunit protein uS19 of Blochmanniella floridana.